Consider the following 610-residue polypeptide: Terminase, large subunit (610 aa).

The interval 30–94 (RKDEDGIHWI…SRYMGLPNLK (65 aa)) is ssDNA-binding. The interval 131–301 (DYGVIKVQLR…NHFYDIWTAA (171 aa)) is ATPase activity. Residues Gln138 and Gln143 each contribute to the ATP site. A Walker A motif motif is present at residues 161–167 (SRQLGKT). ATP is bound at residue Arg202. The Walker B motif motif lies at 251–256 (MIYIDE). Glu256 serves as the catalytic For ATPase activity. The ATPase coupling motif lies at 285 to 287 (TTT). Residues 328-352 (IFDDGWQWSIQTINGSSLAQFRQEH) are binding to the portal protein. The segment at 360–559 (SGTLISGMKL…FGWLSTQSKF (200 aa)) is nuclease activity. Mg(2+) is bound by residues Asp401, Glu458, and Asp542.

Belongs to the Tequatrovirus large terminase family. In terms of assembly, interacts with the terminase small subunit; the active complex is composed of a pentamer of terminase large subunits and a dodecamer of terminase small subunits. Interacts with the portal protein. Interacts with the RNA polymerase sigma factor gp55. Mg(2+) serves as cofactor. Phosphorylated.

Its activity is regulated as follows. Stimulated up to 50 to 100-fold by the terminase small subunit. Modestly activated by portal protein and single-stranded binding protein gp32 multimers. Its function is as follows. The terminase large subunit acts as an ATP driven molecular motor necessary for viral DNA translocation into empty capsids and as an endonuclease that cuts the viral genome to initiate and to end a packaging reaction. The terminase lies at a unique vertex of the procapsid and is composed of two subunits, a small terminase subunit involved in viral DNA recognition (packaging sequence), and a large terminase subunit possessing endonucleolytic and ATPase activities. Both terminase subunits heterooligomerize and are docked on the portal protein to form the packaging machine. The terminase large subunit exhibits endonuclease activity and cleaves the viral genome concatemer once the capsid is full (headful packaging). Once the capsid is packaged with the DNA, the terminase complex is substituted by the tail. The sequence is that of Terminase, large subunit (17) from Escherichia coli (Bacteriophage T4).